The chain runs to 555 residues: CTP synthase (555 aa).

The segment at 1 to 267 (MAKFVFVTGG…CKEVLDCLDL (267 aa)) is amidoligase domain. S13 lines the CTP pocket. UTP is bound at residue S13. Residues 14–19 (SIGKGI) and D71 contribute to the ATP site. Residues D71 and E141 each contribute to the Mg(2+) site. Residues 148–150 (DIE), 188–193 (KTKPTQ), and K224 contribute to the CTP site. Residues 188–193 (KTKPTQ) and K224 contribute to the UTP site. The region spanning 292–534 (KVALVGKYVQ…IQAAQIRVPS (243 aa)) is the Glutamine amidotransferase type-1 domain. G354 is an L-glutamine binding site. The Nucleophile; for glutamine hydrolysis role is filled by C381. L-glutamine contacts are provided by residues 382–385 (LGMQ), E405, and R462. Residues H507 and E509 contribute to the active site. A disordered region spans residues 536-555 (PSEAFNPQSKIIEKKSLEQQ). The segment covering 546 to 555 (IIEKKSLEQQ) has biased composition (basic and acidic residues).

It belongs to the CTP synthase family. As to quaternary structure, homotetramer.

It catalyses the reaction UTP + L-glutamine + ATP + H2O = CTP + L-glutamate + ADP + phosphate + 2 H(+). The catalysed reaction is L-glutamine + H2O = L-glutamate + NH4(+). It carries out the reaction UTP + NH4(+) + ATP = CTP + ADP + phosphate + 2 H(+). It participates in pyrimidine metabolism; CTP biosynthesis via de novo pathway; CTP from UDP: step 2/2. With respect to regulation, allosterically activated by GTP, when glutamine is the substrate; GTP has no effect on the reaction when ammonia is the substrate. The allosteric effector GTP functions by stabilizing the protein conformation that binds the tetrahedral intermediate(s) formed during glutamine hydrolysis. Inhibited by the product CTP, via allosteric rather than competitive inhibition. Catalyzes the ATP-dependent amination of UTP to CTP with either L-glutamine or ammonia as the source of nitrogen. Regulates intracellular CTP levels through interactions with the four ribonucleotide triphosphates. In Prochlorococcus marinus (strain NATL1A), this protein is CTP synthase.